Reading from the N-terminus, the 464-residue chain is Fumarate hydratase class II (464 aa).

Residues S98 to T100, H129 to D132, S139 to N141, and T187 each bind substrate. Catalysis depends on H188, which acts as the Proton donor/acceptor. S318 is a catalytic residue. Substrate-binding positions include S319 and K324–N326.

It belongs to the class-II fumarase/aspartase family. Fumarase subfamily. As to quaternary structure, homotetramer.

It is found in the cytoplasm. The enzyme catalyses (S)-malate = fumarate + H2O. The protein operates within carbohydrate metabolism; tricarboxylic acid cycle; (S)-malate from fumarate: step 1/1. In terms of biological role, involved in the TCA cycle. Catalyzes the stereospecific interconversion of fumarate to L-malate. In Haemophilus influenzae (strain ATCC 51907 / DSM 11121 / KW20 / Rd), this protein is Fumarate hydratase class II.